The chain runs to 609 residues: MSKIIGIDLGTTNSCVAVLEGGEPKVIPNPEGNRTTPSVVAFKNGERLVGEVAKRQAITNPNTIISIKRHMGTDYKVEIEGKKYTPQEISAIILQYLKSYAEDYLGEPVTRAVITVPAYFNDAQRQATKDAGRIAGLEVERIINEPTAAALAYGLDKEEDQTILVYDLGGGTFDVSILELGDGVFEVKATAGDNHLGGDDFDQVIIDYLVEQFKQEHGIDLSKDKMALQRLKDAAEKAKKELSGVTQTQISLPFISANETGPLHLETTLTRAKFEELSAHLVERTMGPVRQALQDAGLTPSDIDKVILVGGSTRIPAVQEAIKRELGKEPHKGVNPDEVVAIGAAIQGGVIAGEVKDVVLLDVTPLSLGIETMGGVFTKLIERNTTIPTSKSQIFTTAADNQTTVDIHVLQGERPMAADNKTLGRFQLTDIPPAPRGVPQIEVTFDIDANGIVHVRAKDLGTNKEQSITIKSSSGLSEEEIQRMIKEAEENAEADRKRKEAAELRNEADQLVFTTEKTLKEVEGKVDEAEVKKAQEAKDALKAALEKNDIDDIRKKKEALQEIVQQLSIKLYEQAAKQAQAQQQAGAGGAAKKDENVVDAEFEEVKDDK.

Position 172 is a phosphothreonine; by autocatalysis (T172). Residues 578 to 609 are disordered; the sequence is QAQAQQQAGAGGAAKKDENVVDAEFEEVKDDK. A compositionally biased stretch (acidic residues) spans 597–609; sequence VVDAEFEEVKDDK.

The protein belongs to the heat shock protein 70 family.

Functionally, acts as a chaperone. This is Chaperone protein DnaK from Geobacillus sp. (strain WCH70).